The following is a 344-amino-acid chain: Arginine N-succinyltransferase (344 aa).

Position 125 (Leu125) interacts with succinyl-CoA. Catalysis depends on His229, which acts as the Proton donor.

Belongs to the arginine N-succinyltransferase family.

The enzyme catalyses succinyl-CoA + L-arginine = N(2)-succinyl-L-arginine + CoA + H(+). It functions in the pathway amino-acid degradation; L-arginine degradation via AST pathway; L-glutamate and succinate from L-arginine: step 1/5. Functionally, catalyzes the transfer of succinyl-CoA to arginine to produce N(2)-succinylarginine. The sequence is that of Arginine N-succinyltransferase from Salmonella agona (strain SL483).